The sequence spans 105 residues: uncharacterized protein (105 aa).

Residues 58–105 (YRKKKPNHSRDNPRINSNLSTNYAQAKSVERSRSNSLNSGPNPLENAT) are disordered. Polar residues-rich tracts occupy residues 71-82 (RINSNLSTNYAQ) and 91-105 (SNSLNSGPNPLENAT).

The protein localises to the mitochondrion. This is an uncharacterized protein from Arabidopsis thaliana (Mouse-ear cress).